An 815-amino-acid polypeptide reads, in one-letter code: Glycogen phosphorylase (815 aa).

Residue K662 is modified to N6-(pyridoxal phosphate)lysine.

This sequence belongs to the glycogen phosphorylase family. It depends on pyridoxal 5'-phosphate as a cofactor.

The catalysed reaction is [(1-&gt;4)-alpha-D-glucosyl](n) + phosphate = [(1-&gt;4)-alpha-D-glucosyl](n-1) + alpha-D-glucose 1-phosphate. Its function is as follows. Phosphorylase is an important allosteric enzyme in carbohydrate metabolism. Enzymes from different sources differ in their regulatory mechanisms and in their natural substrates. However, all known phosphorylases share catalytic and structural properties. This chain is Glycogen phosphorylase (glgP), found in Shigella flexneri.